A 244-amino-acid chain; its full sequence is 3-oxoacyl-[acyl-carrier-protein] reductase FabG (244 aa).

NADP(+) is bound by residues 12–15 (GASR) and Thr-37. Ca(2+) is bound by residues Gly-50 and Gly-53. NADP(+)-binding positions include 59–60 (NV) and Asn-86. Substrate is bound at residue Ser-138. Asn-145 is a Ca(2+) binding site. Residue Tyr-151 is the Proton acceptor of the active site. Residues 151–155 (YAAAK) and Ile-184 contribute to the NADP(+) site. Ca(2+) contacts are provided by Glu-233 and Thr-234.

Belongs to the short-chain dehydrogenases/reductases (SDR) family. Homotetramer.

The catalysed reaction is a (3R)-hydroxyacyl-[ACP] + NADP(+) = a 3-oxoacyl-[ACP] + NADPH + H(+). It catalyses the reaction 3-oxobutanoyl-[ACP] + NADPH + H(+) = (3R)-hydroxybutanoyl-[ACP] + NADP(+). It carries out the reaction 3-oxopentanoyl-[ACP] + NADPH + H(+) = (3R)-hydroxypentanoyl-[ACP] + NADP(+). The enzyme catalyses 3-oxohexanoyl-[ACP] + NADPH + H(+) = (3R)-hydroxyhexanoyl-[ACP] + NADP(+). The catalysed reaction is 3-oxoheptanoyl-[ACP] + NADPH + H(+) = (3R)-hydroxyheptanoyl-[ACP] + NADP(+). It catalyses the reaction 3-oxooctanoyl-[ACP] + NADPH + H(+) = (3R)-hydroxyoctanoyl-[ACP] + NADP(+). It carries out the reaction 3-oxononanoyl-[ACP] + NADPH + H(+) = (3R)-hydroxynonanoyl-[ACP] + NADP(+). The enzyme catalyses 3-oxodecanoyl-[ACP] + NADPH + H(+) = (3R)-hydroxydecanoyl-[ACP] + NADP(+). The catalysed reaction is 3-oxohexadecanoyl-[ACP] + NADPH + H(+) = (3R)-hydroxyhexadecanoyl-[ACP] + NADP(+). It catalyses the reaction 3-oxo-(9Z)-hexadecenoyl-[ACP] + NADPH + H(+) = (3R)-hydroxy-(9Z)-hexadecenoyl-[ACP] + NADP(+). It carries out the reaction 4-methyl-3-oxopentanoyl-[ACP] + NADPH + H(+) = (3R)-hydroxy-4-methylpentanoyl-[ACP] + NADP(+). The enzyme catalyses 5-methyl-3-oxohexanoyl-[ACP] + NADPH + H(+) = (3R)-hydroxy-5-methylhexanoyl-[ACP] + NADP(+). The catalysed reaction is 4-methyl-3-oxohexanoyl-[ACP] + NADPH + H(+) = (3R)-hydroxy-4-methylhexanoyl-[ACP] + NADP(+). It functions in the pathway lipid metabolism; fatty acid biosynthesis. Its activity is regulated as follows. Inhibited by cinnamic acid derivatives. Its function is as follows. Catalyzes the NADPH-dependent reduction of beta-ketoacyl-ACP substrates to beta-hydroxyacyl-ACP products, the first reductive step in the elongation cycle of fatty acid biosynthesis. The sequence is that of 3-oxoacyl-[acyl-carrier-protein] reductase FabG (fabG) from Escherichia coli (strain K12).